A 491-amino-acid polypeptide reads, in one-letter code: MESNCVQFLGNKTILITGAPGFLAKVLVEKILRLQPNVKKIYLLLRAPDEKSAMQRLRSEVMEIDLFKVLRNNLGEDNLNALMREKIVPVPGDISIDNLGLKDTDLIQRMWSEIDIIINIAATTNFDERYDIGLGINTFGALNVLNFAKKCVKGQLLLHVSTAYISGEQPGLLLEKPFKMGETLSGDRELDINIEHDLMKQKLKELQDCSDEEISQTMKDFGMARAKLHGWPNTYVFTKAMGEMLMGKYRENLPLVIIRPTMITSTIAEPFPGWIEGLKTLDSVIVAYGKGRLKCFLADSNSVFDLIPADMVVNAMVAAATAHSGDTGIQAIYHVGSSCKNPVTFGQLHDFTARYFAKRPLIGRNGSPIIVVKGTILSTMAQFSLYMTLRYKLPLQILRLINIVYPWSHGDNYSDLSRKIKLAMRLVELYQPYLLFKGIFDDLNTERLRMKRKENIKELDGSFEFDPKSIDWDNYITNTHIPGLITHVLKQ.

It belongs to the fatty acyl-CoA reductase family. In terms of tissue distribution, expressed in the endodermal cell layer surrounding the central vasculature in roots. Expressed in the hilum region of seeds. Expressed in lateral root tips, cotyledons, the shoot apex, young leaves, petals, stamen filaments, and receptacle of siliques.

It catalyses the reaction a long-chain fatty acyl-CoA + 2 NADPH + 2 H(+) = a long-chain primary fatty alcohol + 2 NADP(+) + CoA. Functionally, catalyzes the reduction of fatty acyl-CoA to fatty alcohols. Catalyzes specifically the formation of C18:0 and C22:0 fatty alcohols. Provides the fatty alcohols required for synthesis of suberin in roots, seed coat and wound-induced leaf tissue. Provides the fatty alcohols required for synthesis of alkyl hydroxycinnamates in root waxes. The chain is Fatty acyl-CoA reductase 1 from Arabidopsis thaliana (Mouse-ear cress).